The primary structure comprises 474 residues: ATP synthase subunit beta (474 aa).

ATP is bound at residue 151–158 (GGAGVGKT).

It belongs to the ATPase alpha/beta chains family. As to quaternary structure, F-type ATPases have 2 components, CF(1) - the catalytic core - and CF(0) - the membrane proton channel. CF(1) has five subunits: alpha(3), beta(3), gamma(1), delta(1), epsilon(1). CF(0) has three main subunits: a(1), b(2) and c(9-12). The alpha and beta chains form an alternating ring which encloses part of the gamma chain. CF(1) is attached to CF(0) by a central stalk formed by the gamma and epsilon chains, while a peripheral stalk is formed by the delta and b chains.

The protein localises to the cell inner membrane. The enzyme catalyses ATP + H2O + 4 H(+)(in) = ADP + phosphate + 5 H(+)(out). In terms of biological role, produces ATP from ADP in the presence of a proton gradient across the membrane. The catalytic sites are hosted primarily by the beta subunits. This is ATP synthase subunit beta from Paracoccus denitrificans (strain Pd 1222).